The following is a 76-amino-acid chain: COMM domain-containing protein 6 (76 aa).

Residues 9–76 (KLVDFQWKLG…KDMSNMIETL (68 aa)) enclose the COMM domain.

The protein belongs to the COMM domain-containing protein 6 family. As to quaternary structure, component of the commander complex consisting of the CCC subcomplex and the retriever subcomplex. Component of the CCC subcomplex.

Scaffold protein in the commander complex that is essential for endosomal recycling of transmembrane cargos; the commander complex is composed of the CCC subcomplex and the retriever subcomplex. This Dictyostelium discoideum (Social amoeba) protein is COMM domain-containing protein 6 (commd6).